We begin with the raw amino-acid sequence, 206 residues long: Small ribosomal subunit protein uS4 (206 aa).

In terms of domain architecture, S4 RNA-binding spans 96–156 (GRLDNVVYRM…EKSKNQLRIQ (61 aa)).

The protein belongs to the universal ribosomal protein uS4 family. Part of the 30S ribosomal subunit. Contacts protein S5. The interaction surface between S4 and S5 is involved in control of translational fidelity.

Its function is as follows. One of the primary rRNA binding proteins, it binds directly to 16S rRNA where it nucleates assembly of the body of the 30S subunit. With S5 and S12 plays an important role in translational accuracy. This chain is Small ribosomal subunit protein uS4, found in Saccharophagus degradans (strain 2-40 / ATCC 43961 / DSM 17024).